The sequence spans 262 residues: Acyl-[acyl-carrier-protein]--UDP-N-acetylglucosamine O-acyltransferase (262 aa).

The protein belongs to the transferase hexapeptide repeat family. LpxA subfamily. As to quaternary structure, homotrimer.

The protein resides in the cytoplasm. It catalyses the reaction a (3R)-hydroxyacyl-[ACP] + UDP-N-acetyl-alpha-D-glucosamine = a UDP-3-O-[(3R)-3-hydroxyacyl]-N-acetyl-alpha-D-glucosamine + holo-[ACP]. Its pathway is glycolipid biosynthesis; lipid IV(A) biosynthesis; lipid IV(A) from (3R)-3-hydroxytetradecanoyl-[acyl-carrier-protein] and UDP-N-acetyl-alpha-D-glucosamine: step 1/6. Its function is as follows. Involved in the biosynthesis of lipid A, a phosphorylated glycolipid that anchors the lipopolysaccharide to the outer membrane of the cell. The chain is Acyl-[acyl-carrier-protein]--UDP-N-acetylglucosamine O-acyltransferase from Pectobacterium atrosepticum (strain SCRI 1043 / ATCC BAA-672) (Erwinia carotovora subsp. atroseptica).